The chain runs to 193 residues: Cilia- and flagella-associated protein 20 (193 aa).

The protein belongs to the CFAP20 family. Microtubule inner protein component of sperm flagellar doublet microtubules.

Its subcellular location is the nucleus. It localises to the cytoplasm. It is found in the cytoskeleton. The protein resides in the microtubule organizing center. The protein localises to the centrosome. Its subcellular location is the centriole. It localises to the cilium basal body. It is found in the cilium axoneme. The protein resides in the flagellum axoneme. Functionally, cilium- and flagellum-specific protein that plays a role in axonemal structure organization and motility. Microtubule inner protein (MIP) part of the dynein-decorated doublet microtubules (DMTs) in cilia axoneme, which is required for motile cilia beating. Involved in the regulation of the size and morphology of cilia. Required for axonemal microtubules polyglutamylation. In Homo sapiens (Human), this protein is Cilia- and flagella-associated protein 20.